The sequence spans 209 residues: Orotate phosphoribosyltransferase (209 aa).

5-phospho-alpha-D-ribose 1-diphosphate-binding positions include Arg96, Lys100, His102, and 122–130 (EDLISTGGS). Ser126 provides a ligand contact to orotate.

This sequence belongs to the purine/pyrimidine phosphoribosyltransferase family. PyrE subfamily. Homodimer. Mg(2+) is required as a cofactor.

The catalysed reaction is orotidine 5'-phosphate + diphosphate = orotate + 5-phospho-alpha-D-ribose 1-diphosphate. It functions in the pathway pyrimidine metabolism; UMP biosynthesis via de novo pathway; UMP from orotate: step 1/2. Catalyzes the transfer of a ribosyl phosphate group from 5-phosphoribose 1-diphosphate to orotate, leading to the formation of orotidine monophosphate (OMP). The chain is Orotate phosphoribosyltransferase from Streptococcus pyogenes serotype M12 (strain MGAS2096).